The following is an 88-amino-acid chain: MAVVLRLSRAGTHKAPFYHVVATDSRNARDGKYLEDVGIYDPTKRPERIELKVERIEHWLKAGAKPSQTVAMILKRAAKAAAPVAPKA.

This sequence belongs to the bacterial ribosomal protein bS16 family.

The protein is Small ribosomal subunit protein bS16 of Anaeromyxobacter sp. (strain K).